The following is a 423-amino-acid chain: Steroid hormone receptor ERR1 (423 aa).

Residues 1 to 67 are disordered; the sequence is MSSQVVGIEP…GAGPGEQGGG (67 aa). Residues 1 to 76 form a repressor domain region; the sequence is MSSQVVGIEP…GKLVLSSLPK (76 aa). Residue Lys14 forms a Glycyl lysine isopeptide (Lys-Gly) (interchain with G-Cter in SUMO) linkage. Phosphoserine is present on residues Ser19 and Ser22. Positions 58 to 67 are enriched in gly residues; the sequence is GAGPGEQGGG. A DNA-binding region (nuclear receptor) is located at residues 76-151; sequence KRLCLVCGDV…VGMLKEGVRL (76 aa). NR C4-type zinc fingers lie at residues 79–99 and 115–134; these read CLVCGDVASGYHYGVASCEAC and CPASNECEITKRRRKACQAC. N6-acetyllysine; by PCAF/KAT2B occurs at positions 129, 138, 160, and 162. Lys189 is covalently cross-linked (Glycyl lysine isopeptide (Lys-Gly) (interchain with G-Cter in SUMO2)). An NR LBD domain is found at 193–421; sequence PVNALVSHLL…KLFLEMLEAM (229 aa). Residue Lys403 forms a Glycyl lysine isopeptide (Lys-Gly) (interchain with G-Cter in SUMO); alternate linkage. Residue Lys403 forms a Glycyl lysine isopeptide (Lys-Gly) (interchain with G-Cter in SUMO2); alternate linkage. Positions 403-423 are AF-2 domain; the sequence is KLEGKVPMHKLFLEMLEAMMD.

The protein belongs to the nuclear hormone receptor family. NR3 subfamily. In terms of assembly, binds DNA as a monomer or a homodimer. Interacts (via the AF2 domain) with coactivator PPARGC1A (via the L3 motif); the interaction greatly enhances transcriptional activity of genes involved in energy metabolism. Interacts with PIAS4; the interaction enhances sumoylation. Interacts with MAPK15; promotes re-localization of ESRRA to the cytoplasm through a XPO1-dependent mechanism then inhibits ESRRA transcriptional activity. Phosphorylation on Ser-19 enhances sumoylation on Lys-14 increasing repression of transcriptional activity. In terms of processing, sumoylated with SUMO2. Main site is Lys-14 which is enhanced by phosphorylation on Ser-19, cofactor activation, and by interaction with PIAS4. Sumoylation enhances repression of transcriptional activity, but has no effect on subcellular location nor on DNA binding. Post-translationally, reversibly acetylated. Acetylation by PCAF/KAT2 at Lys-129, Lys-138, Lys-160 and Lys-162 and PCAF/KAT2 decreases transcriptional activity probably by inhibiting DNA-binding activity; deacetylation involves SIRT1 and HDAC8 and increases DNA-binding.

It is found in the nucleus. The protein localises to the cytoplasm. Its function is as follows. Binds to an ERR-alpha response element (ERRE) containing a single consensus half-site, 5'-TNAAGGTCA-3'. Can bind to the medium-chain acyl coenzyme A dehydrogenase (MCAD) response element NRRE-1 and may act as an important regulator of MCAD promoter. Binds to the C1 region of the lactoferrin gene promoter. Requires dimerization and the coactivator, PGC-1A, for full activity. The ERRalpha/PGC1alpha complex is a regulator of energy metabolism. Induces the expression of PERM1 in the skeletal muscle. This is Steroid hormone receptor ERR1 (ESRRA) from Homo sapiens (Human).